Consider the following 128-residue polypeptide: Calcitonin gene-related peptide 1 (128 aa).

Positions 1-25 are cleaved as a signal peptide; the sequence is MGFQKFSPFLALSILVLLQAGSLHA. Residues 26 to 80 constitute a propeptide that is removed on maturation; sequence APFRSALESSPADPATLSEDEARLLLAALVQDYVQMKASELEQEQEREGSRIIAQ. C84 and C89 are joined by a disulfide. F119 bears the Phenylalanine amide mark. Positions 125–128 are excised as a propeptide; it reads DLQA.

This sequence belongs to the calcitonin family. As to expression, expressed in spinal cord.

It localises to the secreted. In terms of biological role, CGRP1/CALCA is a peptide hormone that induces vasodilation mediated by the CALCRL-RAMP1 receptor complex. Dilates a variety of vessels including the coronary, cerebral and systemic vasculature. Its abundance in the CNS also points toward a neurotransmitter or neuromodulator role. It also elevates platelet cAMP. CGRP1 can also bind and activate CALCR-RAMP1 (AMYR1) receptor complex. The polypeptide is Calcitonin gene-related peptide 1 (Homo sapiens (Human)).